Here is a 457-residue protein sequence, read N- to C-terminus: Siroheme synthase (457 aa).

The interval 1-204 (MDHLPIFCQL…ADEKAVNATT (204 aa)) is precorrin-2 dehydrogenase /sirohydrochlorin ferrochelatase. NAD(+)-binding positions include 22–23 (DV) and 43–44 (LN). S128 carries the post-translational modification Phosphoserine. The segment at 216–457 (GEVVLVGAGP…RDKLNWFSNH (242 aa)) is uroporphyrinogen-III C-methyltransferase. P225 contributes to the S-adenosyl-L-methionine binding site. D248 (proton acceptor) is an active-site residue. K270 functions as the Proton donor in the catalytic mechanism. Residues 301–303 (GGD), I306, 331–332 (TA), M382, and G411 contribute to the S-adenosyl-L-methionine site.

This sequence in the N-terminal section; belongs to the precorrin-2 dehydrogenase / sirohydrochlorin ferrochelatase family. It in the C-terminal section; belongs to the precorrin methyltransferase family.

It carries out the reaction uroporphyrinogen III + 2 S-adenosyl-L-methionine = precorrin-2 + 2 S-adenosyl-L-homocysteine + H(+). It catalyses the reaction precorrin-2 + NAD(+) = sirohydrochlorin + NADH + 2 H(+). The enzyme catalyses siroheme + 2 H(+) = sirohydrochlorin + Fe(2+). It participates in cofactor biosynthesis; adenosylcobalamin biosynthesis; precorrin-2 from uroporphyrinogen III: step 1/1. Its pathway is cofactor biosynthesis; adenosylcobalamin biosynthesis; sirohydrochlorin from precorrin-2: step 1/1. The protein operates within porphyrin-containing compound metabolism; siroheme biosynthesis; precorrin-2 from uroporphyrinogen III: step 1/1. It functions in the pathway porphyrin-containing compound metabolism; siroheme biosynthesis; siroheme from sirohydrochlorin: step 1/1. It participates in porphyrin-containing compound metabolism; siroheme biosynthesis; sirohydrochlorin from precorrin-2: step 1/1. Multifunctional enzyme that catalyzes the SAM-dependent methylations of uroporphyrinogen III at position C-2 and C-7 to form precorrin-2 via precorrin-1. Then it catalyzes the NAD-dependent ring dehydrogenation of precorrin-2 to yield sirohydrochlorin. Finally, it catalyzes the ferrochelation of sirohydrochlorin to yield siroheme. The polypeptide is Siroheme synthase (Salmonella paratyphi A (strain ATCC 9150 / SARB42)).